The chain runs to 230 residues: Ribonuclease HII (230 aa).

The region spanning 28 to 217 (FRIAGIDEAG…VKEHLPSQPD (190 aa)) is the RNase H type-2 domain. Residues aspartate 34, glutamate 35, and aspartate 126 each contribute to the a divalent metal cation site. The segment at 211-230 (HLPSQPDCDTAGPSTGLFSF) is disordered.

Belongs to the RNase HII family. Mn(2+) is required as a cofactor. It depends on Mg(2+) as a cofactor.

It is found in the cytoplasm. It carries out the reaction Endonucleolytic cleavage to 5'-phosphomonoester.. Endonuclease that specifically degrades the RNA of RNA-DNA hybrids. The chain is Ribonuclease HII from Geobacter sp. (strain M21).